The chain runs to 313 residues: Ribose-phosphate pyrophosphokinase (313 aa).

Residues 37–39 (DGE) and 96–97 (RQ) contribute to the ATP site. Mg(2+) is bound by residues H131 and D170. K193 is an active-site residue. D-ribose 5-phosphate contacts are provided by residues R195, D219, and 223 to 227 (DTAGT).

This sequence belongs to the ribose-phosphate pyrophosphokinase family. Class I subfamily. As to quaternary structure, homohexamer. Mg(2+) is required as a cofactor.

It is found in the cytoplasm. It carries out the reaction D-ribose 5-phosphate + ATP = 5-phospho-alpha-D-ribose 1-diphosphate + AMP + H(+). It functions in the pathway metabolic intermediate biosynthesis; 5-phospho-alpha-D-ribose 1-diphosphate biosynthesis; 5-phospho-alpha-D-ribose 1-diphosphate from D-ribose 5-phosphate (route I): step 1/1. Its function is as follows. Involved in the biosynthesis of the central metabolite phospho-alpha-D-ribosyl-1-pyrophosphate (PRPP) via the transfer of pyrophosphoryl group from ATP to 1-hydroxyl of ribose-5-phosphate (Rib-5-P). The sequence is that of Ribose-phosphate pyrophosphokinase from Pseudomonas aeruginosa (strain ATCC 15692 / DSM 22644 / CIP 104116 / JCM 14847 / LMG 12228 / 1C / PRS 101 / PAO1).